Here is a 34-residue protein sequence, read N- to C-terminus: Small ribosomal subunit protein uS2c (34 aa).

This sequence belongs to the universal ribosomal protein uS2 family.

It is found in the plastid. Its subcellular location is the chloroplast. This chain is Small ribosomal subunit protein uS2c (rps2), found in Ochrosphaera neapolitana.